Consider the following 455-residue polypeptide: Proline--tRNA ligase (455 aa).

Thr101, Glu103, and Arg132 together coordinate L-proline. 4 residues coordinate ATP: Arg132, Glu134, Gln216, and Thr219. L-proline is bound at residue His221. ATP-binding residues include Ser253 and Arg255. The interaction with tRNA stretch occupies residues 329-359 (EIKGVPLRIEVGPKDIENKKITLFRRDTMEK).

The protein belongs to the class-II aminoacyl-tRNA synthetase family. ProS type 3 subfamily. In terms of assembly, homodimer. The dimer is functionally asymmetric: only one of the two active sites at a time is able to form prolyl-adenylate, and only one tRNA molecule binds per dimer.

The protein localises to the cytoplasm. The enzyme catalyses tRNA(Pro) + L-proline + ATP = L-prolyl-tRNA(Pro) + AMP + diphosphate. Inhibited by high concentrations of prolinamide. In terms of biological role, catalyzes the attachment of proline to tRNA(Pro) in a two-step reaction: proline is first activated by ATP to form Pro-AMP and then transferred to the acceptor end of tRNA(Pro). Can inadvertently accommodate and process non-cognate amino acids such as cysteine and alanine. This is Proline--tRNA ligase (proS) from Methanocaldococcus jannaschii (strain ATCC 43067 / DSM 2661 / JAL-1 / JCM 10045 / NBRC 100440) (Methanococcus jannaschii).